A 159-amino-acid chain; its full sequence is Ribosomal RNA large subunit methyltransferase H (159 aa).

Residues Leu76, Gly108, and 127 to 132 each bind S-adenosyl-L-methionine; that span reads FGLLTL.

Belongs to the RNA methyltransferase RlmH family. Homodimer.

The protein resides in the cytoplasm. It carries out the reaction pseudouridine(1915) in 23S rRNA + S-adenosyl-L-methionine = N(3)-methylpseudouridine(1915) in 23S rRNA + S-adenosyl-L-homocysteine + H(+). Its function is as follows. Specifically methylates the pseudouridine at position 1915 (m3Psi1915) in 23S rRNA. This Leuconostoc mesenteroides subsp. mesenteroides (strain ATCC 8293 / DSM 20343 / BCRC 11652 / CCM 1803 / JCM 6124 / NCDO 523 / NBRC 100496 / NCIMB 8023 / NCTC 12954 / NRRL B-1118 / 37Y) protein is Ribosomal RNA large subunit methyltransferase H.